The chain runs to 146 residues: Core protein D2 (146 aa).

It belongs to the orthopoxvirus OPG114 family. Part of a complex composed of the kinase OPG054, OPG092, OPG100, OPG114, OPG115, OPG142 and OPG157.

It is found in the virion. Functionally, late protein which is part of a large complex required for early virion morphogenesis. This complex participates in the formation of virosomes and the incorporation of virosomal contents into nascent immature virions. The chain is Core protein D2 (OPG114) from Homo sapiens (Human).